The chain runs to 425 residues: Histidine--tRNA ligase (425 aa).

Belongs to the class-II aminoacyl-tRNA synthetase family. As to quaternary structure, homodimer.

The protein localises to the cytoplasm. The enzyme catalyses tRNA(His) + L-histidine + ATP = L-histidyl-tRNA(His) + AMP + diphosphate + H(+). The protein is Histidine--tRNA ligase of Shewanella sp. (strain W3-18-1).